The sequence spans 302 residues: Protoheme IX farnesyltransferase (302 aa).

A run of 9 helical transmembrane segments spans residues 28 to 48 (VVALMILTSVIGMLLAAPGVP), 50 to 70 (WSVLLFGNLGIALLAGAAAVV), 95 to 115 (IAPLDALLFATVLAALGMVVL), 122 to 142 (LTAWLTLASLVGYAGVYTLFL), 150 to 170 (IVIGGLAGAMPPLLGWTAVTG), 176 to 196 (ALLLVLIIFAWTPPHFWALAI), 221 to 241 (LHILLYTLMLLAVSLLPFVTG), 243 to 263 (SGGIYLVGALALGLRFLQYAV), and 282 to 302 (ITYLMALFVVLLVDHFVFVPA).

It belongs to the UbiA prenyltransferase family. Protoheme IX farnesyltransferase subfamily.

The protein resides in the cell inner membrane. The catalysed reaction is heme b + (2E,6E)-farnesyl diphosphate + H2O = Fe(II)-heme o + diphosphate. It participates in porphyrin-containing compound metabolism; heme O biosynthesis; heme O from protoheme: step 1/1. Converts heme B (protoheme IX) to heme O by substitution of the vinyl group on carbon 2 of heme B porphyrin ring with a hydroxyethyl farnesyl side group. This is Protoheme IX farnesyltransferase from Marinobacter nauticus (strain ATCC 700491 / DSM 11845 / VT8) (Marinobacter aquaeolei).